A 316-amino-acid chain; its full sequence is Beta-ketoacyl-[acyl-carrier-protein] synthase III 1 (316 aa).

Catalysis depends on residues Cys-112 and His-243. The ACP-binding stretch occupies residues 244–248; the sequence is QANYR. Asn-273 is a catalytic residue.

Belongs to the thiolase-like superfamily. FabH family. Homodimer.

The protein localises to the cytoplasm. It carries out the reaction malonyl-[ACP] + acetyl-CoA + H(+) = 3-oxobutanoyl-[ACP] + CO2 + CoA. The protein operates within lipid metabolism; fatty acid biosynthesis. Catalyzes the condensation reaction of fatty acid synthesis by the addition to an acyl acceptor of two carbons from malonyl-ACP. Catalyzes the first condensation reaction which initiates fatty acid synthesis and may therefore play a role in governing the total rate of fatty acid production. Possesses both acetoacetyl-ACP synthase and acetyl transacylase activities. Its substrate specificity determines the biosynthesis of branched-chain and/or straight-chain of fatty acids. The chain is Beta-ketoacyl-[acyl-carrier-protein] synthase III 1 from Vibrio parahaemolyticus serotype O3:K6 (strain RIMD 2210633).